The chain runs to 180 residues: Large ribosomal subunit protein uL5 (180 aa).

It belongs to the universal ribosomal protein uL5 family. In terms of assembly, part of the 50S ribosomal subunit; part of the 5S rRNA/L5/L18/L25 subcomplex. Contacts the 5S rRNA and the P site tRNA. Forms a bridge to the 30S subunit in the 70S ribosome.

Functionally, this is one of the proteins that bind and probably mediate the attachment of the 5S RNA into the large ribosomal subunit, where it forms part of the central protuberance. In the 70S ribosome it contacts protein S13 of the 30S subunit (bridge B1b), connecting the 2 subunits; this bridge is implicated in subunit movement. Contacts the P site tRNA; the 5S rRNA and some of its associated proteins might help stabilize positioning of ribosome-bound tRNAs. The protein is Large ribosomal subunit protein uL5 of Stenotrophomonas maltophilia (strain R551-3).